Here is a 449-residue protein sequence, read N- to C-terminus: Tripartite motif-containing protein 64B (449 aa).

An RING-type zinc finger spans residues 15–56; sequence CCICVNYFIDPVTIDCGHSFCRPCLCLCSEEGRAPMRCPSCR. Residues 87 to 128 form a B box-type zinc finger; sequence SSDNICVLHEETKELFCEADKRLLCGPCSESPEHMAHSHSPI. Residues Cys-92, His-95, Cys-114, and His-120 each contribute to the Zn(2+) site. Positions 189-225 form a coiled coil; it reads LDEEEQRHLQALEREAEELFQQLQDSQVRMTQHLERM. One can recognise a B30.2/SPRY domain in the interval 268–449; the sequence is ELTSWCITGV…LRPFFCFGCT (182 aa).

The protein belongs to the TRIM/RBCC family.

The protein is Tripartite motif-containing protein 64B (TRIM64B) of Homo sapiens (Human).